We begin with the raw amino-acid sequence, 463 residues long: Trigger factor (463 aa).

Positions 162 to 243 (GDVVTLDLEA…VSQVAARELP (82 aa)) constitute a PPIase FKBP-type domain. Residues 427–463 (TNGEIVDLDDEDETESTPETTEAAEAAEESTEDKPEA) are disordered. The segment covering 432–442 (VDLDDEDETES) has biased composition (acidic residues).

This sequence belongs to the FKBP-type PPIase family. Tig subfamily.

The protein resides in the cytoplasm. The catalysed reaction is [protein]-peptidylproline (omega=180) = [protein]-peptidylproline (omega=0). Its function is as follows. Involved in protein export. Acts as a chaperone by maintaining the newly synthesized protein in an open conformation. Functions as a peptidyl-prolyl cis-trans isomerase. The sequence is that of Trigger factor from Streptomyces avermitilis (strain ATCC 31267 / DSM 46492 / JCM 5070 / NBRC 14893 / NCIMB 12804 / NRRL 8165 / MA-4680).